Here is a 171-residue protein sequence, read N- to C-terminus: Auxin-responsive protein IAA33 (171 aa).

Composition is skewed to polar residues over residues M1 to S11 and D19 to P32. The tract at residues M1–A51 is disordered. The segment covering K40–S49 has biased composition (low complexity). The region spanning V72–G162 is the PB1 domain.

It belongs to the Aux/IAA family. In terms of assembly, homodimers and heterodimers.

It localises to the nucleus. Its function is as follows. Aux/IAA proteins are short-lived transcriptional factors that function as repressors of early auxin response genes at low auxin concentrations. Repression is thought to result from the interaction with auxin response factors (ARFs), proteins that bind to the auxin-responsive promoter element (AuxRE). Formation of heterodimers with ARF proteins may alter their ability to modulate early auxin response genes expression. In Arabidopsis thaliana (Mouse-ear cress), this protein is Auxin-responsive protein IAA33 (IAA33).